The chain runs to 150 residues: Urease accessory protein UreE (150 aa).

The protein belongs to the UreE family.

The protein localises to the cytoplasm. Involved in urease metallocenter assembly. Binds nickel. Probably functions as a nickel donor during metallocenter assembly. The polypeptide is Urease accessory protein UreE (Streptococcus vestibularis).